A 253-amino-acid chain; its full sequence is Ubiquinone/menaquinone biosynthesis C-methyltransferase UbiE (253 aa).

S-adenosyl-L-methionine-binding positions include Thr76, Asp97, and 125-126 (NA).

Belongs to the class I-like SAM-binding methyltransferase superfamily. MenG/UbiE family.

The enzyme catalyses a 2-demethylmenaquinol + S-adenosyl-L-methionine = a menaquinol + S-adenosyl-L-homocysteine + H(+). It catalyses the reaction a 2-methoxy-6-(all-trans-polyprenyl)benzene-1,4-diol + S-adenosyl-L-methionine = a 5-methoxy-2-methyl-3-(all-trans-polyprenyl)benzene-1,4-diol + S-adenosyl-L-homocysteine + H(+). It functions in the pathway quinol/quinone metabolism; menaquinone biosynthesis; menaquinol from 1,4-dihydroxy-2-naphthoate: step 2/2. It participates in cofactor biosynthesis; ubiquinone biosynthesis. Methyltransferase required for the conversion of demethylmenaquinol (DMKH2) to menaquinol (MKH2) and the conversion of 2-polyprenyl-6-methoxy-1,4-benzoquinol (DDMQH2) to 2-polyprenyl-3-methyl-6-methoxy-1,4-benzoquinol (DMQH2). This Bradyrhizobium sp. (strain BTAi1 / ATCC BAA-1182) protein is Ubiquinone/menaquinone biosynthesis C-methyltransferase UbiE.